The sequence spans 670 residues: MKKIKIVPLILIVVVVGFGIYFYASKDKEINNTIDAIEDKNFKQVYKDSSYISKSDNGEVEMTERPIKIYNSLGVKDINIQDRKIKKVSKNKKRVDAQYKIKTNYGNIDRNVQFNFVKEDGMWKLDWDHSVIIPGMQKDQSIHIENLKSERGKILDRNNVELANTGTHMRLGIVPKNVSKKDYKAIAKELSISEDYINNKWIKIGYKMIPSFHFKTVKKMDEYLSDFAKKFHLTTNETESRNYPLGKATSHLLGYVGPINSEELKQKEYKGYKDDAVIGKKGLEKLYDKKLQHEDGYRVTIVRVDDNSNTIAHTLIEKKKKDGKDIQLTIDAKVQKSIYNNMKNDYGSGTAIHPQTGELLALVSTPSYDVYPFMYGMSNEEYNKLTEDKKEPLLNKFQITTSPGSTQKILTAMIGLNNKTLDDKTSYKIDGKGWQKDKSWGGYNVTRYEVVNGNIDLKQAIESSDNIFFARVALELGSKKFEKGMKKLGVGEDIPSDYPFYNAQISNKNLDNEILLADSGYGQGEILINPVQILSIYSALENNGNINAPHLLKDTKNKVWKKNIISKENINLLNDGMQQVVNKTHKEDIYRSYANLIGKSGTAELKMKQGETGRQIGWFISYDKDNPNMMMAINVKDVQDKGMASYNAKISGKVYDELYENGNKKYDIDE.

Residues 4 to 24 (IKIVPLILIVVVVGFGIYFYA) traverse the membrane as a helical segment. S25 and S405 together coordinate a penicillin. S405 functions as the Acyl-ester intermediate in the catalytic mechanism.

This sequence belongs to the transpeptidase family.

The protein localises to the cell membrane. This chain is Beta-lactam-inducible penicillin-binding protein (pbp), found in Staphylococcus aureus.